The chain runs to 174 residues: Large ribosomal subunit protein uL10 (174 aa).

It belongs to the universal ribosomal protein uL10 family. In terms of assembly, part of the ribosomal stalk of the 50S ribosomal subunit. The N-terminus interacts with L11 and the large rRNA to form the base of the stalk. The C-terminus forms an elongated spine to which L12 dimers bind in a sequential fashion forming a multimeric L10(L12)X complex.

Functionally, forms part of the ribosomal stalk, playing a central role in the interaction of the ribosome with GTP-bound translation factors. This is Large ribosomal subunit protein uL10 from Bordetella bronchiseptica (strain ATCC BAA-588 / NCTC 13252 / RB50) (Alcaligenes bronchisepticus).